Reading from the N-terminus, the 301-residue chain is GTPase Era (301 aa).

In terms of domain architecture, Era-type G spans 7–175 (YCGFIAIVGR…AAIVRKHLPE (169 aa)). The segment at 15–22 (GRPNVGKS) is G1. 15–22 (GRPNVGKS) serves as a coordination point for GTP. Positions 41–45 (QTTRH) are G2. Positions 62-65 (DTPG) are G3. Residues 62–66 (DTPGL) and 124–127 (NKVD) each bind GTP. A G4 region spans residues 124–127 (NKVD). A G5 region spans residues 154–156 (ISA). A KH type-2 domain is found at 206-283 (LGAELPYSVT…HLELWVKVKS (78 aa)).

This sequence belongs to the TRAFAC class TrmE-Era-EngA-EngB-Septin-like GTPase superfamily. Era GTPase family. Monomer.

The protein localises to the cytoplasm. Its subcellular location is the cell inner membrane. In terms of biological role, an essential GTPase that binds both GDP and GTP, with rapid nucleotide exchange. Plays a role in 16S rRNA processing and 30S ribosomal subunit biogenesis and possibly also in cell cycle regulation and energy metabolism. This Shigella dysenteriae serotype 1 (strain Sd197) protein is GTPase Era.